A 677-amino-acid polypeptide reads, in one-letter code: UPF0313 protein RPA0679 (677 aa).

In terms of domain architecture, Radical SAM core spans 335–601 (AWDMIKTSVT…VEAIKGLRQR (267 aa)). The [4Fe-4S] cluster site is built by C349, C353, and C356. The interval 635-677 (RPDQLVPAHQPPGTGKAAGTRRPVRGDGPKPQRFTTKGVRLVK) is disordered.

This sequence belongs to the UPF0313 family. Requires [4Fe-4S] cluster as cofactor.

The protein is UPF0313 protein RPA0679 of Rhodopseudomonas palustris (strain ATCC BAA-98 / CGA009).